The following is a 329-amino-acid chain: Uroporphyrinogen decarboxylase (329 aa).

Substrate is bound by residues 22-26 (RQVGR), D71, Y140, S195, and H307.

This sequence belongs to the uroporphyrinogen decarboxylase family. As to quaternary structure, homodimer.

It localises to the cytoplasm. The enzyme catalyses uroporphyrinogen III + 4 H(+) = coproporphyrinogen III + 4 CO2. The protein operates within porphyrin-containing compound metabolism; protoporphyrin-IX biosynthesis; coproporphyrinogen-III from 5-aminolevulinate: step 4/4. Catalyzes the decarboxylation of four acetate groups of uroporphyrinogen-III to yield coproporphyrinogen-III. This is Uroporphyrinogen decarboxylase from Chlamydia pneumoniae (Chlamydophila pneumoniae).